A 535-amino-acid chain; its full sequence is Expansin-like protein 9 (535 aa).

A signal peptide spans 1–25 (MKINKNNYFKIIIFIIYVIINLINA). N-linked (GlcNAc...) asparagine glycosylation is present at Asn24. Residues 26 to 514 (SDNVKLSNCG…DNSSNILLFS (489 aa)) lie on the Extracellular side of the membrane. The Expansin-like EG45 domain occupies 31–144 (LSNCGQARAE…QEVSCGFLGN (114 aa)). Intrachain disulfides connect Cys34–Cys75 and Cys78–Cys139. N-linked (GlcNAc...) asparagine glycosylation is found at Asn122, Asn257, and Asn292. Residues 459 to 487 (VDGSSNDDDGTGGTGGGASNKVGKRVDGE) form a disordered region. N-linked (GlcNAc...) asparagine glycosylation occurs at Asn506. The chain crosses the membrane as a helical span at residues 515-535 (FNITLTFLLLSLIINILLLLF).

Belongs to the expansin family. Expansin A subfamily.

The protein resides in the membrane. May serve to lubricate the movement of the cellulose microfibrils during cell growth and wall extension and/or may serve to maintain the fluid state of the slug cell wall. This is Expansin-like protein 9 (expl9) from Dictyostelium discoideum (Social amoeba).